The primary structure comprises 236 residues: 2,3,4,5-tetrahydropyridine-2,6-dicarboxylate N-acetyltransferase (236 aa).

It belongs to the transferase hexapeptide repeat family. DapH subfamily.

The enzyme catalyses (S)-2,3,4,5-tetrahydrodipicolinate + acetyl-CoA + H2O = L-2-acetamido-6-oxoheptanedioate + CoA. The protein operates within amino-acid biosynthesis; L-lysine biosynthesis via DAP pathway; LL-2,6-diaminopimelate from (S)-tetrahydrodipicolinate (acetylase route): step 1/3. Functionally, catalyzes the transfer of an acetyl group from acetyl-CoA to tetrahydrodipicolinate. This Thermotoga maritima (strain ATCC 43589 / DSM 3109 / JCM 10099 / NBRC 100826 / MSB8) protein is 2,3,4,5-tetrahydropyridine-2,6-dicarboxylate N-acetyltransferase.